Here is a 149-residue protein sequence, read N- to C-terminus: Transcriptional repressor NrdR (149 aa).

A zinc finger spans residues 3-34 (CPFCSHQETQVVETRVSEDGDFIRRRRQCGAC). The region spanning 49 to 139 (PTVVKKDGRR…VYRSFEDIDE (91 aa)) is the ATP-cone domain.

This sequence belongs to the NrdR family. Zn(2+) is required as a cofactor.

Functionally, negatively regulates transcription of bacterial ribonucleotide reductase nrd genes and operons by binding to NrdR-boxes. The sequence is that of Transcriptional repressor NrdR from Acidovorax sp. (strain JS42).